Here is a 766-residue protein sequence, read N- to C-terminus: Coenzyme PQQ synthesis protein F (766 aa).

Histidine 49 contributes to the Zn(2+) binding site. Glutamate 52 (proton acceptor) is an active-site residue. Histidine 53 and glutamate 130 together coordinate Zn(2+).

This sequence belongs to the peptidase M16 family. Zn(2+) serves as cofactor.

It functions in the pathway cofactor biosynthesis; pyrroloquinoline quinone biosynthesis. Its function is as follows. Required for coenzyme pyrroloquinoline quinone (PQQ) biosynthesis. It is thought that this protein is a protease that cleaves peptides bond in a small peptide (gene pqqA), providing the glutamate and tyrosine residues which are necessary for the synthesis of PQQ. This is Coenzyme PQQ synthesis protein F (pqqF) from Pseudomonas putida (strain ATCC 47054 / DSM 6125 / CFBP 8728 / NCIMB 11950 / KT2440).